The following is a 396-amino-acid chain: Pyridinium-3,5-bisthiocarboxylic acid mononucleotide nickel insertion protein (396 aa).

This sequence belongs to the LarC family.

It carries out the reaction Ni(II)-pyridinium-3,5-bisthiocarboxylate mononucleotide = pyridinium-3,5-bisthiocarboxylate mononucleotide + Ni(2+). Functionally, involved in the biosynthesis of a nickel-pincer cofactor ((SCS)Ni(II) pincer complex). Binds Ni(2+), and functions in nickel delivery to pyridinium-3,5-bisthiocarboxylic acid mononucleotide (P2TMN), to form the mature cofactor. Is thus probably required for the activation of nickel-pincer cofactor-dependent enzymes. This chain is Pyridinium-3,5-bisthiocarboxylic acid mononucleotide nickel insertion protein, found in Moorella thermoacetica (strain ATCC 39073 / JCM 9320).